We begin with the raw amino-acid sequence, 355 residues long: Probable low-specificity L-threonine aldolase 2 (355 aa).

Lys-211 is subject to N6-(pyridoxal phosphate)lysine.

This sequence belongs to the threonine aldolase family. It depends on pyridoxal 5'-phosphate as a cofactor. As to expression, expressed in roots, leaf vasculature and flowers.

It carries out the reaction L-threonine = acetaldehyde + glycine. The catalysed reaction is L-allo-threonine = acetaldehyde + glycine. The protein operates within amino-acid degradation; L-threonine degradation via aldolase pathway; acetaldehyde and glycine from L-threonine: step 1/1. Its function is as follows. Threonine aldolase involved in threonine degradation to glycine. May play a role in the removal of L-allo-threonine. The polypeptide is Probable low-specificity L-threonine aldolase 2 (THA2) (Arabidopsis thaliana (Mouse-ear cress)).